Reading from the N-terminus, the 138-residue chain is Putative pre-16S rRNA nuclease (138 aa).

Belongs to the YqgF nuclease family.

It localises to the cytoplasm. Functionally, could be a nuclease involved in processing of the 5'-end of pre-16S rRNA. The protein is Putative pre-16S rRNA nuclease of Salmonella dublin (strain CT_02021853).